A 159-amino-acid chain; its full sequence is Ribosome maturation factor RimP (159 aa).

This sequence belongs to the RimP family.

The protein resides in the cytoplasm. Required for maturation of 30S ribosomal subunits. This chain is Ribosome maturation factor RimP, found in Bordetella avium (strain 197N).